A 443-amino-acid polypeptide reads, in one-letter code: ATP-dependent protease ATPase subunit HslU (443 aa).

Residues isoleucine 18, 60–65 (GVGKTE), aspartate 256, glutamate 321, and arginine 393 contribute to the ATP site.

It belongs to the ClpX chaperone family. HslU subfamily. As to quaternary structure, a double ring-shaped homohexamer of HslV is capped on each side by a ring-shaped HslU homohexamer. The assembly of the HslU/HslV complex is dependent on binding of ATP.

Its subcellular location is the cytoplasm. Functionally, ATPase subunit of a proteasome-like degradation complex; this subunit has chaperone activity. The binding of ATP and its subsequent hydrolysis by HslU are essential for unfolding of protein substrates subsequently hydrolyzed by HslV. HslU recognizes the N-terminal part of its protein substrates and unfolds these before they are guided to HslV for hydrolysis. This chain is ATP-dependent protease ATPase subunit HslU, found in Edwardsiella ictaluri (strain 93-146).